Here is a 369-residue protein sequence, read N- to C-terminus: 4-hydroxy-3-methylbut-2-en-1-yl diphosphate synthase (flavodoxin) (369 aa).

Positions 270, 273, 305, and 312 each coordinate [4Fe-4S] cluster.

Belongs to the IspG family. Requires [4Fe-4S] cluster as cofactor.

It carries out the reaction (2E)-4-hydroxy-3-methylbut-2-enyl diphosphate + oxidized [flavodoxin] + H2O + 2 H(+) = 2-C-methyl-D-erythritol 2,4-cyclic diphosphate + reduced [flavodoxin]. Its pathway is isoprenoid biosynthesis; isopentenyl diphosphate biosynthesis via DXP pathway; isopentenyl diphosphate from 1-deoxy-D-xylulose 5-phosphate: step 5/6. Functionally, converts 2C-methyl-D-erythritol 2,4-cyclodiphosphate (ME-2,4cPP) into 1-hydroxy-2-methyl-2-(E)-butenyl 4-diphosphate. In Pseudomonas putida (strain GB-1), this protein is 4-hydroxy-3-methylbut-2-en-1-yl diphosphate synthase (flavodoxin).